The primary structure comprises 200 residues: GTP cyclohydrolase-2 (200 aa).

Position 50-54 (50-54 (RIHSE)) interacts with GTP. Residues Cys-55, Cys-66, and Cys-68 each coordinate Zn(2+). GTP-binding positions include Gln-71, 93–95 (EGR), and Thr-115. The active-site Proton acceptor is the Asp-127. Residue Arg-129 is the Nucleophile of the active site. Residues Thr-150 and Lys-155 each coordinate GTP.

It belongs to the GTP cyclohydrolase II family. It depends on Zn(2+) as a cofactor.

It catalyses the reaction GTP + 4 H2O = 2,5-diamino-6-hydroxy-4-(5-phosphoribosylamino)-pyrimidine + formate + 2 phosphate + 3 H(+). It functions in the pathway cofactor biosynthesis; riboflavin biosynthesis; 5-amino-6-(D-ribitylamino)uracil from GTP: step 1/4. In terms of biological role, catalyzes the conversion of GTP to 2,5-diamino-6-ribosylamino-4(3H)-pyrimidinone 5'-phosphate (DARP), formate and pyrophosphate. The sequence is that of GTP cyclohydrolase-2 from Acinetobacter baylyi (strain ATCC 33305 / BD413 / ADP1).